Here is a 158-residue protein sequence, read N- to C-terminus: U-limacoditoxin(8)-Dv66 (158 aa).

The signal sequence occupies residues methionine 1–threonine 24. The propeptide occupies arginine 25–arginine 32. A run of 2 repeats spans residues glycine 33–arginine 78 and glycine 79–arginine 124. The 3 X 46 AA tandem repeats stretch occupies residues glycine 33–lysine 158. Proline 63 bears the Proline amide mark. The propeptide occupies glycine 64–arginine 78. The interval alanine 101–glutamate 120 is disordered. Residue proline 109 is modified to Proline amide. Residues glycine 110–arginine 124 constitute a propeptide that is removed on maturation. One copy of the 3; half-length repeat lies at glycine 125–lysine 158. A Proline amide modification is found at proline 155.

This sequence belongs to the diuretic hormone class 2 family. Expressed by the venom secretory cell of the spine. The spine is a cuticular structure containing a single large nucleated venom-secreting cell at its base. It is an independent unit capable of producing, storing and injecting venom. On the back of D.vulnerans caterpillars, spines are grouped together by 50 to 100 to form scoli, of which there are eight in D.vulnerans.

It localises to the secreted. Functionally, probable toxin. Does not show insecticidal, antimicrobial and antiparasitic activities. Does not induce increase in intracellular calcium in mouse DRG neurons, suggesting that it does not induce pain. This Doratifera vulnerans (Mottled cup moth) protein is U-limacoditoxin(8)-Dv66.